Reading from the N-terminus, the 196-residue chain is Translation machinery-associated protein 22 (196 aa).

Residues 97–168 form the SUI1 domain; the sequence is VIVKREARTK…EVVAYIHSLL (72 aa).

It belongs to the DENR family. As to quaternary structure, interacts with the 40S ribosomal subunit.

The protein resides in the cytoplasm. The protein is Translation machinery-associated protein 22 (TMA22) of Candida glabrata (strain ATCC 2001 / BCRC 20586 / JCM 3761 / NBRC 0622 / NRRL Y-65 / CBS 138) (Yeast).